Reading from the N-terminus, the 251-residue chain is Metallo-beta-lactamase domain-containing protein 1 (251 aa).

Residues His118, His120, Asp122, His123, His173, Asp196, and His235 each coordinate Zn(2+).

The protein belongs to the metallo-beta-lactamase superfamily. Glyoxalase II family. Homodimer. Zn(2+) serves as cofactor.

The protein resides in the cytoplasm. The protein localises to the cytosol. It localises to the nucleus. It catalyses the reaction a ribonucleotidyl-ribonucleotide-RNA + H2O = a 3'-end ribonucleotide-RNA + a 5'-end 5'-phospho-ribonucleoside-RNA + H(+). Its function is as follows. Endoribonuclease that catalyzes the hydrolysis of histone-coding pre-mRNA 3'-end. Involved in histone pre-mRNA processing during the S-phase of the cell cycle, which is required for entering/progressing through S-phase. Cleaves histone pre-mRNA at a major and a minor cleavage site after the 5'-ACCCA-3' and the 5'-ACCCACA-3' sequence, respectively, and located downstream of the stem-loop. May require the presence of the HDE element located at the histone pre-RNA 3'-end to avoid non-specific cleavage. This chain is Metallo-beta-lactamase domain-containing protein 1 (Mblac1), found in Rattus norvegicus (Rat).